Consider the following 413-residue polypeptide: MNSMEIRQAFAGLLTLSMFIMLGNMIKKDHFDYPAEEVEIQTTEVSQHDLATVSHISQKSKQNDKALKPCWNPPTLKEVEQSKGFIIFSLTNGPEYHIAQVADAVVVAKYLGATLVLPDIKNSKSGNSMNLGDIYDVENVLNKLNGLVKVTKTLPPHVSTRNTPIVRVPNKVSQDYIMKKLKPIYQAKGIIKIESYFPSKNTISRNNNSLESLLCQTMFGGTLELKKEIQEEAESIVQKLETWSQESNGPFVAVDLRIEGLKNECNGKDGKGRKQCYQGHEIGEFLKRIGFGQETVIYVTQTKWSPDLNSLRYMFPKTYTKENIMSSTKKEKFINSESIEFEKAIDFYICSESDVFVPSILGPFYENVAGMRIVSGKNEIIVPSEVVSPSASASEHMSPYVTKKNHLAYKCFC.

Residues M1–E5 lie on the Cytoplasmic side of the membrane. Residues I6 to I26 form a helical; Signal-anchor for type II membrane protein membrane-spanning segment. The Lumenal portion of the chain corresponds to K27–C413. N207 carries an N-linked (GlcNAc...) asparagine glycan. D255–R257 is a substrate binding site.

It belongs to the glycosyltransferase GT106 family. Highly and specifically expressed in the endosperm.

Its subcellular location is the golgi apparatus membrane. It participates in glycan biosynthesis. In terms of biological role, glycosyltransferase involved in mannan biosynthesis. In Trigonella foenum-graecum (Fenugreek), this protein is Protein MANNAN SYNTHESIS-RELATED.